Here is a 50-residue protein sequence, read N- to C-terminus: Large ribosomal subunit protein eL39 (50 aa).

The protein belongs to the eukaryotic ribosomal protein eL39 family. Part of the 50S ribosomal subunit. Interacts weakly with protein L23.

Functionally, binds to the 23S rRNA. Forms part of the polypeptide exit tunnel. This chain is Large ribosomal subunit protein eL39 (rpl39e), found in Haloarcula marismortui (strain ATCC 43049 / DSM 3752 / JCM 8966 / VKM B-1809) (Halobacterium marismortui).